The chain runs to 135 residues: Succinate dehydrogenase assembly factor 3, mitochondrial (135 aa).

The transit peptide at M1–P12 directs the protein to the mitochondrion.

This sequence belongs to the complex I LYR family. SDHAF3 subfamily. Interacts with the iron-sulfur protein subunit within the SDH catalytic dimer.

Its subcellular location is the mitochondrion matrix. Plays an essential role in the assembly of succinate dehydrogenase (SDH), an enzyme complex (also referred to as respiratory complex II) that is a component of both the tricarboxylic acid (TCA) cycle and the mitochondrial electron transport chain, and which couples the oxidation of succinate to fumarate with the reduction of ubiquinone (coenzyme Q) to ubiquinol. Promotes maturation of the iron-sulfur protein subunit of the SDH catalytic dimer, protecting it from the deleterious effects of oxidants. May act together with SDHAF1. In Emericella nidulans (strain FGSC A4 / ATCC 38163 / CBS 112.46 / NRRL 194 / M139) (Aspergillus nidulans), this protein is Succinate dehydrogenase assembly factor 3, mitochondrial.